Consider the following 633-residue polypeptide: Threonine--tRNA ligase (633 aa).

The TGS domain maps to 1-61 (MINVYFSDNS…TEDCKFEVIT (61 aa)). The catalytic stretch occupies residues 242–533 (DHRKIGKELE…LIEHHSGKLP (292 aa)). Zn(2+) is bound by residues Cys-333, His-384, and His-510.

It belongs to the class-II aminoacyl-tRNA synthetase family. In terms of assembly, homodimer. Zn(2+) is required as a cofactor.

The protein resides in the cytoplasm. It carries out the reaction tRNA(Thr) + L-threonine + ATP = L-threonyl-tRNA(Thr) + AMP + diphosphate + H(+). Catalyzes the attachment of threonine to tRNA(Thr) in a two-step reaction: L-threonine is first activated by ATP to form Thr-AMP and then transferred to the acceptor end of tRNA(Thr). Also edits incorrectly charged L-seryl-tRNA(Thr). The sequence is that of Threonine--tRNA ligase from Ehrlichia ruminantium (strain Welgevonden).